Here is a 432-residue protein sequence, read N- to C-terminus: Glutamyl-tRNA reductase (432 aa).

Residues 50-53 (TCNR), Ser110, 115-117 (ETQ), and Gln121 each bind substrate. The active-site Nucleophile is the Cys51. 190–195 (GVGEMS) lines the NADP(+) pocket.

This sequence belongs to the glutamyl-tRNA reductase family. As to quaternary structure, homodimer.

It catalyses the reaction (S)-4-amino-5-oxopentanoate + tRNA(Glu) + NADP(+) = L-glutamyl-tRNA(Glu) + NADPH + H(+). It participates in porphyrin-containing compound metabolism; protoporphyrin-IX biosynthesis; 5-aminolevulinate from L-glutamyl-tRNA(Glu): step 1/2. Functionally, catalyzes the NADPH-dependent reduction of glutamyl-tRNA(Glu) to glutamate 1-semialdehyde (GSA). In Sulfurimonas denitrificans (strain ATCC 33889 / DSM 1251) (Thiomicrospira denitrificans (strain ATCC 33889 / DSM 1251)), this protein is Glutamyl-tRNA reductase.